The chain runs to 390 residues: MGQRLSGGRSCLDVPGRLLPQPPPPPPPVRRKLALLFAMLCVWLYMFLYSCAGSCAAAPGLLLLGSGSRAAHDPPALATAPDGTPPRLPFRAPPATPLASGKEMAEGAASPEEQSPEVPDSPSPISSFFSGSGSKQLPQAIIIGVKKGGTRALLEFLRVHPDVRAVGAEPHFFDRSYDKGLAWYRDLMPRTLDGQITMEKTPSYFVTREAPARISAMSKDTKLIVVVRDPVTRAISDYTQTLSKRPDIPTFESLTFKNRTAGLIDTSWSAIQIGIYAKHLEHWLRHFPIRQMLFVSGERLISDPAGELGRVQDFLGLKRIITDKHFYFNKTKGFPCLKKAEGSSRPHCLGKTKGRTHPEIDREVVRRLREFYRPFNLKFYQMTGHDFGWD.

Residues Met-1–Pro-25 are disordered. Topologically, residues Met-1–Lys-32 are cytoplasmic. The helical; Signal-anchor for type II membrane protein transmembrane segment at Leu-33 to Gly-53 threads the bilayer. Over Ser-54–Asp-390 the chain is Lumenal. Residues Pro-74–Gly-133 form a disordered region. A compositionally biased stretch (pro residues) spans Gly-83–Thr-96. Residues Ser-123–Gly-133 are compositionally biased toward low complexity. Residue Lys-147–Arg-151 coordinates 3'-phosphoadenylyl sulfate. Substrate-binding positions include Glu-169 to Arg-175 and Lys-200 to Ser-203. Arg-228 and Ser-236 together coordinate 3'-phosphoadenylyl sulfate. Asn-258 is a glycosylation site (N-linked (GlcNAc...) asparagine). Residue Trp-268–Ser-269 coordinates substrate. N-linked (GlcNAc...) asparagine glycosylation is present at Asn-329. A disulfide bridge connects residues Cys-336 and Cys-348. Lys-353–His-357 is a binding site for 3'-phosphoadenylyl sulfate.

It belongs to the sulfotransferase 1 family. Ubiquitous. Most abundant in liver and placenta, followed by heart and kidney.

The protein localises to the golgi apparatus membrane. It carries out the reaction alpha-D-glucosaminyl-[heparan sulfate](n) + 3'-phosphoadenylyl sulfate = 3-sulfo-alpha-D-glucosaminyl-[heparan sulfate](n) + adenosine 3',5'-bisphosphate + H(+). Sulfotransferase that utilizes 3'-phospho-5'-adenylyl sulfate (PAPS) to catalyze the transfer of a sulfo group to an N-unsubstituted glucosamine linked to a 2-O-sulfo iduronic acid unit on heparan sulfate. Catalyzes the O-sulfation of glucosamine in IdoUA2S-GlcNS and also in IdoUA2S-GlcNH2. The substrate-specific O-sulfation generates an enzyme-modified heparan sulfate which acts as a binding receptor to Herpes simplex virus-1 (HSV-1) and permits its entry. Unlike HS3ST1/3-OST-1, does not convert non-anticoagulant heparan sulfate to anticoagulant heparan sulfate. The chain is Heparan sulfate glucosamine 3-O-sulfotransferase 3B1 (HS3ST3B1) from Homo sapiens (Human).